A 250-amino-acid chain; its full sequence is Flavin-dependent thymidylate synthase (250 aa).

One can recognise a ThyX domain in the interval 7 to 233 (LRVQLIAKTD…PSIFGDFDIA (227 aa)). FAD is bound by residues S71, 95 to 97 (RHR), and Q103. Residues 92-95 (ELIR), 103-107 (QLSQR), and R172 each bind dUMP. The ThyX motif signature appears at 95–105 (RHRHFSYSQLS). FAD contacts are provided by residues 188–190 (NYR) and H194. R199 is a binding site for dUMP. The active-site Involved in ionization of N3 of dUMP, leading to its activation is the R199.

It belongs to the thymidylate synthase ThyX family. As to quaternary structure, homotetramer. It depends on FAD as a cofactor.

It carries out the reaction dUMP + (6R)-5,10-methylene-5,6,7,8-tetrahydrofolate + NADPH + H(+) = dTMP + (6S)-5,6,7,8-tetrahydrofolate + NADP(+). It participates in pyrimidine metabolism; dTTP biosynthesis. Its function is as follows. Catalyzes the reductive methylation of 2'-deoxyuridine-5'-monophosphate (dUMP) to 2'-deoxythymidine-5'-monophosphate (dTMP) while utilizing 5,10-methylenetetrahydrofolate (mTHF) as the methyl donor, and NADPH and FADH(2) as the reductant. This chain is Flavin-dependent thymidylate synthase, found in Mycobacteroides abscessus (strain ATCC 19977 / DSM 44196 / CCUG 20993 / CIP 104536 / JCM 13569 / NCTC 13031 / TMC 1543 / L948) (Mycobacterium abscessus).